Here is a 333-residue protein sequence, read N- to C-terminus: DNA primase small subunit PriS (333 aa).

Catalysis depends on residues aspartate 96, aspartate 98, and aspartate 237.

It belongs to the eukaryotic-type primase small subunit family. As to quaternary structure, heterodimer of a small subunit (PriS) and a large subunit (PriL). It depends on Mg(2+) as a cofactor. The cofactor is Mn(2+).

Catalytic subunit of DNA primase, an RNA polymerase that catalyzes the synthesis of short RNA molecules used as primers for DNA polymerase during DNA replication. The small subunit contains the primase catalytic core and has DNA synthesis activity on its own. Binding to the large subunit stabilizes and modulates the activity, increasing the rate of DNA synthesis while decreasing the length of the DNA fragments, and conferring RNA synthesis capability. The DNA polymerase activity may enable DNA primase to also catalyze primer extension after primer synthesis. May also play a role in DNA repair. The polypeptide is DNA primase small subunit PriS (Thermoplasma volcanium (strain ATCC 51530 / DSM 4299 / JCM 9571 / NBRC 15438 / GSS1)).